The sequence spans 442 residues: Elongation factor 1-alpha (442 aa).

Residues 6-229 (KPHMNLIVIG…ALDNLKPPSV (224 aa)) enclose the tr-type G domain. Positions 15–22 (GHVDHGKS) are G1. A GTP-binding site is contributed by 15–22 (GHVDHGKS). Serine 22 serves as a coordination point for Mg(2+). The tract at residues 71–75 (GVTID) is G2. The interval 92 to 95 (DAPG) is G3. GTP is bound by residues 92-96 (DAPGH) and 154-157 (NKMD). The tract at residues 154 to 157 (NKMD) is G4. Residues 195–197 (SAW) form a G5 region.

This sequence belongs to the TRAFAC class translation factor GTPase superfamily. Classic translation factor GTPase family. EF-Tu/EF-1A subfamily.

It is found in the cytoplasm. The catalysed reaction is GTP + H2O = GDP + phosphate + H(+). GTP hydrolase that promotes the GTP-dependent binding of aminoacyl-tRNA to the A-site of ribosomes during protein biosynthesis. The polypeptide is Elongation factor 1-alpha (Ignicoccus hospitalis (strain KIN4/I / DSM 18386 / JCM 14125)).